The sequence spans 105 residues: Delta-hexatoxin-Mg1a (105 aa).

The first 18 residues, 1 to 18 (MKTLVIACVALVLVVVHG), serve as a signal peptide directing secretion. The propeptide occupies 19–60 (EVIEEVNEKQLQESVEEKYSLLQRLEKLDEAITAEENRNSRV). Cystine bridges form between C63–C77, C70–C82, C76–C93, and C78–C105.

Belongs to the neurotoxin 06 (delta-actx) family. As to expression, expressed by the venom gland.

It is found in the secreted. Selectively slows channel inactivation of mammalian Nav1.1/SCN1A, Nav1.3/SCN3A, and Nav1.6/SCN8A and shows higher affinity for insect Nav1/para channels (site 3). Induces tonic repetitive firing of nerve impulses in insect neurons accompanied by plateau potentials. The protein is Delta-hexatoxin-Mg1a of Macrothele gigas (Japanese funnel web spider).